Reading from the N-terminus, the 184-residue chain is Photosystem I assembly protein Ycf4 (184 aa).

2 helical membrane-spanning segments follow: residues 19–39 (ISNF…LLVG) and 57–77 (IIFF…LFIS).

The protein belongs to the Ycf4 family.

It localises to the plastid. Its subcellular location is the chloroplast thylakoid membrane. Seems to be required for the assembly of the photosystem I complex. The protein is Photosystem I assembly protein Ycf4 of Nicotiana sylvestris (Wood tobacco).